The sequence spans 365 residues: DNA replication and repair protein RecF (365 aa).

23 to 30 (GPNGIGKS) provides a ligand contact to ATP.

This sequence belongs to the RecF family.

It localises to the cytoplasm. Functionally, the RecF protein is involved in DNA metabolism; it is required for DNA replication and normal SOS inducibility. RecF binds preferentially to single-stranded, linear DNA. It also seems to bind ATP. The protein is DNA replication and repair protein RecF of Parasynechococcus marenigrum (strain WH8102).